A 206-amino-acid polypeptide reads, in one-letter code: Thymidylate kinase (206 aa).

Glycine 10 to threonine 17 is a binding site for ATP.

It belongs to the thymidylate kinase family.

The catalysed reaction is dTMP + ATP = dTDP + ADP. Functionally, phosphorylation of dTMP to form dTDP in both de novo and salvage pathways of dTTP synthesis. The protein is Thymidylate kinase of Bifidobacterium longum (strain NCC 2705).